Consider the following 340-residue polypeptide: uncharacterized protein (340 aa).

The helical transmembrane segment at 6–26 threads the bilayer; sequence ITFGLLVLMVCVILFVLYVQL.

It localises to the cell membrane. This is an uncharacterized protein from Bacillus subtilis (strain 168).